We begin with the raw amino-acid sequence, 178 residues long: Prion-like protein doppel (178 aa).

The N-terminal stretch at 1-25 (MRKHLGGCWLAIVCVLLFSQLSSVK) is a signal peptide. The tract at residues 27–50 (RGIKHRIKWNRKVLPSTSQVTEAH) is flexible tail. Positions 51–154 (TAEIRPGAFI…KHCDFWLERG (104 aa)) are globular. Disulfide bonds link cysteine 94-cysteine 147 and cysteine 108-cysteine 142. 2 N-linked (GlcNAc...) asparagine glycosylation sites follow: asparagine 98 and asparagine 110. The interval 124 to 141 (KQDNKLYQRVLWQLIREL) is cu(2+) binding. Glycine 154 is lipidated: GPI-anchor amidated glycine. Residues 155 to 178 (AGLQVTLDQPMMLCLLVFIWFIVK) constitute a propeptide, removed in mature form.

This sequence belongs to the prion family. N-glycosylated. Post-translationally, O-glycosylated. Strongly expressed in testis. Detected at low levels in lymph node, spleen and ovary.

It localises to the cell membrane. In terms of biological role, required for normal acrosome reaction and for normal male fertility. Can bind Cu(2+). The chain is Prion-like protein doppel (PRND) from Ovis aries (Sheep).